The following is a 232-amino-acid chain: MGKLTKNQKLVLSKIEVGRMYTFKEASVVIKEITTTMFDASVDMDVRLGIDPRKANQMIRGVVSLPHGLGKRVRVLALVTPDQEGFARNAGADYVGLNEYIEKIKNGWTDVDVIIAHPSVMGRVGILGKILGPRGLMPNPKSGTVANDVSTAVKEVKQGKIDFRVDKGGIVHTSIGRISFTPEQICDNAKEFMATLLKVRPAVVRGIYIKSVYLSSTMSPSLRVDSKSVDGD.

Belongs to the universal ribosomal protein uL1 family. In terms of assembly, part of the 50S ribosomal subunit.

Functionally, binds directly to 23S rRNA. The L1 stalk is quite mobile in the ribosome, and is involved in E site tRNA release. Protein L1 is also a translational repressor protein, it controls the translation of the L11 operon by binding to its mRNA. The protein is Large ribosomal subunit protein uL1 of Azobacteroides pseudotrichonymphae genomovar. CFP2.